We begin with the raw amino-acid sequence, 875 residues long: GATOR2 complex protein MIOS (875 aa).

WD repeat units follow at residues 61–100 (PYMK…NSKF), 111–155 (KHAR…TPDI), 182–221 (GQND…QKMF), 223–261 (NTKA…KPVL), 265–306 (EQPK…TPIG), and 395–437 (RLRA…KQYT). Residues 735 to 781 (VSCNFCGKSISYSCSAVPHQGRGFSQYGVSGSPTKSKVTSCPGCRKP) form a C4-type zinc finger. The Zn(2+) site is built by Cys737 and Cys740. Phosphoserine occurs at positions 759 and 766. Residues Cys775, Cys778, Cys788, Cys827, Cys830, His832, His835, His838, Cys849, Cys854, and Cys858 each coordinate Zn(2+). The RING-type; atypical zinc-finger motif lies at 782-863 (LPRCALCLIN…CTCKCMQLDT (82 aa)).

It belongs to the WD repeat mio family. Component of the GATOR2 subcomplex, composed of MIOS, SEC13, SEH1L, WDR24 and WDR59. The GATOR2 complex interacts with CASTOR1 and CASTOR2; the interaction is negatively regulated by arginine. CASTOR1 and CASTOR2 convey leucine availability via direct interaction with MIOS. The GATOR2 complex interacts with SESN1, SESN2 and SESN3; the interaction is negatively regulated by amino acids. Interacts with SAR1A and SAR1B; the interaction is direct, disrupted by leucine and mediates the interaction of SAR1A or SAR1B with the GATOR2 complex to negatively regulate the TORC1 signaling upon leucine deprivation.

The protein localises to the lysosome membrane. The GATOR2 complex is negatively regulated by the upstream amino acid sensors CASTOR1 and SESN2, which sequester the GATOR2 complex in absence of amino acids. In the presence of abundant amino acids, GATOR2 is released from CASTOR1 and SESN2 and activated. As a component of the GATOR2 complex, functions as an activator of the amino acid-sensing branch of the mTORC1 signaling pathway. The GATOR2 complex indirectly activates mTORC1 through the inhibition of the GATOR1 subcomplex. GATOR2 probably acts as an E3 ubiquitin-protein ligase toward GATOR1. In the presence of abundant amino acids, the GATOR2 complex mediates ubiquitination of the NPRL2 core component of the GATOR1 complex, leading to GATOR1 inactivation. In the absence of amino acids, GATOR2 is inhibited, activating the GATOR1 complex. Within the GATOR2 complex, MIOS is required to prevent autoubiquitination of WDR24, the catalytic subunit of the complex. The GATOR2 complex is required for brain myelination. The sequence is that of GATOR2 complex protein MIOS from Pongo abelii (Sumatran orangutan).